A 182-amino-acid polypeptide reads, in one-letter code: ATP synthase subunit delta 2 (182 aa).

It belongs to the ATPase delta chain family. F-type ATPases have 2 components, F(1) - the catalytic core - and F(0) - the membrane proton channel. F(1) has five subunits: alpha(3), beta(3), gamma(1), delta(1), epsilon(1). F(0) has three main subunits: a(1), b(2) and c(10-14). The alpha and beta chains form an alternating ring which encloses part of the gamma chain. F(1) is attached to F(0) by a central stalk formed by the gamma and epsilon chains, while a peripheral stalk is formed by the delta and b chains.

Its subcellular location is the cell inner membrane. In terms of biological role, f(1)F(0) ATP synthase produces ATP from ADP in the presence of a proton or sodium gradient. F-type ATPases consist of two structural domains, F(1) containing the extramembraneous catalytic core and F(0) containing the membrane proton channel, linked together by a central stalk and a peripheral stalk. During catalysis, ATP synthesis in the catalytic domain of F(1) is coupled via a rotary mechanism of the central stalk subunits to proton translocation. Its function is as follows. This protein is part of the stalk that links CF(0) to CF(1). It either transmits conformational changes from CF(0) to CF(1) or is implicated in proton conduction. In Photobacterium profundum (strain SS9), this protein is ATP synthase subunit delta 2.